A 428-amino-acid chain; its full sequence is Glutamate-1-semialdehyde 2,1-aminomutase (428 aa).

Lys267 bears the N6-(pyridoxal phosphate)lysine mark.

This sequence belongs to the class-III pyridoxal-phosphate-dependent aminotransferase family. HemL subfamily. In terms of assembly, homodimer. Pyridoxal 5'-phosphate serves as cofactor.

The protein localises to the cytoplasm. The catalysed reaction is (S)-4-amino-5-oxopentanoate = 5-aminolevulinate. It functions in the pathway porphyrin-containing compound metabolism; protoporphyrin-IX biosynthesis; 5-aminolevulinate from L-glutamyl-tRNA(Glu): step 2/2. It participates in porphyrin-containing compound metabolism; chlorophyll biosynthesis. The sequence is that of Glutamate-1-semialdehyde 2,1-aminomutase from Prochlorococcus marinus (strain MIT 9303).